Here is a 137-residue protein sequence, read N- to C-terminus: Small ribosomal subunit protein uS11 (137 aa).

Residues 1–25 (MADRRRGAARGGAARPRRRERKNIP) form a disordered region. Positions 15–25 (RPRRRERKNIP) are enriched in basic residues.

This sequence belongs to the universal ribosomal protein uS11 family. In terms of assembly, part of the 30S ribosomal subunit. Interacts with proteins S7 and S18. Binds to IF-3.

Located on the platform of the 30S subunit, it bridges several disparate RNA helices of the 16S rRNA. Forms part of the Shine-Dalgarno cleft in the 70S ribosome. In Thermomicrobium roseum (strain ATCC 27502 / DSM 5159 / P-2), this protein is Small ribosomal subunit protein uS11.